The sequence spans 308 residues: 4-hydroxyproline 2-epimerase (308 aa).

Catalysis depends on Cys88, which acts as the Proton acceptor. Residues 89-90 (GH), His208, and Asp232 contribute to the substrate site. Catalysis depends on Cys236, which acts as the Proton donor. 237–238 (GT) lines the substrate pocket.

Belongs to the proline racemase family.

It carries out the reaction trans-4-hydroxy-L-proline = cis-4-hydroxy-D-proline. In terms of biological role, catalyzes the reversible epimerization of cis-4-hydroxy-D-proline (c4DHyp) to trans-4-hydroxy-L-proline (t4LHyp). May be involved in a degradation pathway that allows P.putida strain KT2440 to grow on either epimer of 4-hydroxyproline, c4DHyp and t4LHyp, as the sole carbon and nitrogen source. Does not exhibit measureable racemase activity in vitro with any of the 19 natural chiral amino acid enantiomers. In Pseudomonas putida (strain ATCC 47054 / DSM 6125 / CFBP 8728 / NCIMB 11950 / KT2440), this protein is 4-hydroxyproline 2-epimerase.